The chain runs to 602 residues: Elongation factor 4 (602 aa).

The tr-type G domain occupies K7 to K189. GTP is bound by residues D19–T24 and N136–D139.

Belongs to the TRAFAC class translation factor GTPase superfamily. Classic translation factor GTPase family. LepA subfamily.

It is found in the cell membrane. It carries out the reaction GTP + H2O = GDP + phosphate + H(+). Required for accurate and efficient protein synthesis under certain stress conditions. May act as a fidelity factor of the translation reaction, by catalyzing a one-codon backward translocation of tRNAs on improperly translocated ribosomes. Back-translocation proceeds from a post-translocation (POST) complex to a pre-translocation (PRE) complex, thus giving elongation factor G a second chance to translocate the tRNAs correctly. Binds to ribosomes in a GTP-dependent manner. This is Elongation factor 4 from Alkaliphilus oremlandii (strain OhILAs) (Clostridium oremlandii (strain OhILAs)).